Here is a 225-residue protein sequence, read N- to C-terminus: NAD(P)H-quinone oxidoreductase subunit K, chloroplastic (225 aa).

4 residues coordinate [4Fe-4S] cluster: Cys-43, Cys-44, Cys-108, and Cys-139.

It belongs to the complex I 20 kDa subunit family. In terms of assembly, NDH is composed of at least 16 different subunits, 5 of which are encoded in the nucleus. [4Fe-4S] cluster serves as cofactor.

It localises to the plastid. It is found in the chloroplast thylakoid membrane. It catalyses the reaction a plastoquinone + NADH + (n+1) H(+)(in) = a plastoquinol + NAD(+) + n H(+)(out). The catalysed reaction is a plastoquinone + NADPH + (n+1) H(+)(in) = a plastoquinol + NADP(+) + n H(+)(out). Functionally, NDH shuttles electrons from NAD(P)H:plastoquinone, via FMN and iron-sulfur (Fe-S) centers, to quinones in the photosynthetic chain and possibly in a chloroplast respiratory chain. The immediate electron acceptor for the enzyme in this species is believed to be plastoquinone. Couples the redox reaction to proton translocation, and thus conserves the redox energy in a proton gradient. The chain is NAD(P)H-quinone oxidoreductase subunit K, chloroplastic from Nicotiana tabacum (Common tobacco).